Here is a 136-residue protein sequence, read N- to C-terminus: Ribulose bisphosphate carboxylase small subunit, chloroplastic 1 (136 aa).

The transit peptide at 1 to 13 directs the protein to the chloroplast; the sequence is NTDITSNGERVKC.

Belongs to the RuBisCO small chain family. In terms of assembly, heterohexadecamer of 8 large and 8 small subunits.

It is found in the plastid. The protein localises to the chloroplast. In terms of biological role, ruBisCO catalyzes two reactions: the carboxylation of D-ribulose 1,5-bisphosphate, the primary event in carbon dioxide fixation, as well as the oxidative fragmentation of the pentose substrate. Both reactions occur simultaneously and in competition at the same active site. Although the small subunit is not catalytic it is essential for maximal activity. This Pisum sativum (Garden pea) protein is Ribulose bisphosphate carboxylase small subunit, chloroplastic 1.